The chain runs to 975 residues: Protein spalten (975 aa).

Disordered regions lie at residues 1-31 (MKKM…QLAQ) and 64-99 (NLAQ…SNNN). The segment covering 8–17 (NKKEKKEEQS) has biased composition (basic and acidic residues). A coiled-coil region spans residues 21–70 (SSLAQQHQLAQQQYQLQQQQLQLQYQQHQQQLQLAQQQKQNEQNLAQLST). Positions 114 to 458 (FCGTIMILGH…DAEKRGFTTP (345 aa)) constitute a G-alpha domain. Positions 117–130 (TIMILGHTESGKTT) are G1 motif. GTP contacts are provided by residues 122–129 (GHTESGKT), 261–267 (ISAYDQK), 286–290 (GCSGK), and 373–376 (NTSD). Residues 259–267 (DIISAYDQK) are G2 motif. A G3 motif region spans residues 282-291 (VDLFGCSGKQ). Residues 369 to 376 (YLIFNTSD) form a G4 motif region. Residues 427-432 (VNLLDK) are G5 motif. Disordered regions lie at residues 455–520 (FTTP…GSST) and 541–700 (DNDS…VGSK). 3 stretches are compositionally biased toward low complexity: residues 460-478 (NQSN…SRNS), 500-515 (LKNV…NTTT), and 544-587 (SSYS…NNAT). The span at 595 to 688 (PPKEPKPVKP…DGAAESKKNG (94 aa)) shows a compositional bias: basic and acidic residues. Residues 704–972 (ESGFGSLQGR…DNITVLVVIL (269 aa)) enclose the PPM-type phosphatase domain. Positions 749, 750, 920, and 963 each coordinate Mn(2+).

This sequence in the N-terminal section; belongs to the G-alpha family. The protein in the C-terminal section; belongs to the PP2C family. G proteins are composed of 3 units; alpha, beta and gamma. The alpha chain contains the guanine nucleotide binding site. Mg(2+) is required as a cofactor. Requires Mn(2+) as cofactor.

Its subcellular location is the cytoplasm. The protein resides in the cytosol. The protein localises to the cell membrane. The enzyme catalyses O-phospho-L-seryl-[protein] + H2O = L-seryl-[protein] + phosphate. It carries out the reaction O-phospho-L-threonyl-[protein] + H2O = L-threonyl-[protein] + phosphate. Inhibited by 50 mM NaF (sodium fluoride). Involved in cell-type differentiation and morphogenesis. Dephosphorylates casein; in vitro. May also be involved as modulators or transducers in various transmembrane signaling systems. The polypeptide is Protein spalten (spnA) (Dictyostelium discoideum (Social amoeba)).